A 130-amino-acid polypeptide reads, in one-letter code: Ribosome-binding factor A (130 aa).

It belongs to the RbfA family. In terms of assembly, monomer. Binds 30S ribosomal subunits, but not 50S ribosomal subunits or 70S ribosomes.

It localises to the cytoplasm. Its function is as follows. One of several proteins that assist in the late maturation steps of the functional core of the 30S ribosomal subunit. Associates with free 30S ribosomal subunits (but not with 30S subunits that are part of 70S ribosomes or polysomes). Required for efficient processing of 16S rRNA. May interact with the 5'-terminal helix region of 16S rRNA. This chain is Ribosome-binding factor A, found in Prochlorococcus marinus (strain AS9601).